The following is a 577-amino-acid chain: Protein NUCLEOLAR COMPLEX ASSOCIATED 4 (577 aa).

Positions 230 to 263 (PEKQAEKSQHEMWSGSDESISEKPTDKKKKTEKG) are disordered. Transmembrane regions (helical) follow at residues 329–349 (IGGVVSVMALSSLFILMTQHG), 350–370 (LEYPFFYEKLYALLVPSVFVA), and 404–424 (LSLSIPPAGSLVITALIYNLL).

This sequence belongs to the CBF/MAK21 family. In terms of assembly, component of the ribosomal small subunit (SSU) processome composed of at least 40 protein subunits and snoRNA U3. In terms of tissue distribution, mostly expressed in flowers and stems and at lower levels in roots, hypocotyls, siliques, leaves and seeds.

The protein localises to the nucleus membrane. It is found in the nucleus. Its subcellular location is the nucleolus. Its function is as follows. Essential protein required during embryogenesis. Involved in nucleolar processing of ribosomal RNA (rRNA) 40S and 90S ribosomal subunits and ribosome assembly; early in ribosome biogenesis, especially required during the maturation of 5.8S rRNA. Has a role in the nuclear export of 40S pre-ribosomal subunit to the cytoplasm. The polypeptide is Protein NUCLEOLAR COMPLEX ASSOCIATED 4 (Arabidopsis thaliana (Mouse-ear cress)).